We begin with the raw amino-acid sequence, 147 residues long: UPF0306 protein YpAngola_A4021 (147 aa).

It belongs to the UPF0306 family.

The chain is UPF0306 protein YpAngola_A4021 from Yersinia pestis bv. Antiqua (strain Angola).